Consider the following 99-residue polypeptide: uncharacterized protein (99 aa).

This is an uncharacterized protein from Acidianus hospitalis (AFV-1).